Here is a 346-residue protein sequence, read N- to C-terminus: Annexin A1 (346 aa).

Position 5 is a phosphoserine; by TRPM7 (Ser5). Gln19 participates in a covalent cross-link: Isoglutamyl lysine isopeptide (Gln-Lys) (interchain with K-?). A Phosphotyrosine; by EGFR modification is found at Tyr21. A phosphoserine mark is found at Ser34 and Ser37. Annexin repeat units lie at residues 42 to 113 (FNPS…ALLK), 114 to 185 (TPAR…SLAK), 197 to 269 (DLAD…AIVK), and 273 to 344 (SKPM…ALCG). N6-acetyllysine is present on Lys58. Gly59, Val60, Glu62, Lys97, Leu100, Glu105, Met127, Gly129, Gly131, Thr132, and Glu134 together coordinate Ca(2+). Residue Thr136 is modified to Phosphothreonine. The Ca(2+) site is built by Asp171, Gly210, and Arg213. Residue Lys214 forms a Glycyl lysine isopeptide (Lys-Gly) (interchain with G-Cter in SUMO1); alternate linkage. Lys214 participates in a covalent cross-link: Glycyl lysine isopeptide (Lys-Gly) (interchain with G-Cter in SUMO2); alternate. 4 residues coordinate Ca(2+): Gly215, Asp253, Glu255, and Met256. Lys257 participates in a covalent cross-link: Glycyl lysine isopeptide (Lys-Gly) (interchain with G-Cter in SUMO1). Residues Glu261, Met286, Gly288, and Gly290 each contribute to the Ca(2+) site. The residue at position 312 (Lys312) is an N6-acetyllysine. An intrachain disulfide couples Cys324 to Cys343. Ca(2+) contacts are provided by Leu328, Glu330, and Thr331. Lys332 is covalently cross-linked (Glycyl lysine isopeptide (Lys-Gly) (interchain with G-Cter in SUMO1)). Residue Glu336 participates in Ca(2+) binding.

It belongs to the annexin family. Homodimer; non-covalently linked. Homodimer; linked by transglutamylation. Homodimers linked by transglutamylation are observed in placenta, but not in other tissues. Interacts with S100A11. Heterotetramer, formed by two molecules each of S100A11 and ANXA1. Interacts with DYSF. Interacts with EGFR. Post-translationally, phosphorylated by protein kinase C, EGFR and TRPM7. Phosphorylated in response to EGF treatment. In terms of processing, sumoylated. Proteolytically cleaved by cathepsin CTSG to release the active N-terminal peptide Ac2-26.

The protein resides in the nucleus. It localises to the cytoplasm. Its subcellular location is the cell projection. The protein localises to the cilium. It is found in the basolateral cell membrane. The protein resides in the lateral cell membrane. It localises to the cell membrane. Its subcellular location is the apical cell membrane. The protein localises to the membrane. It is found in the early endosome. The protein resides in the cytoplasmic vesicle membrane. It localises to the endosome membrane. Its subcellular location is the secreted. The protein localises to the extracellular space. It is found in the extracellular exosome. The protein resides in the cytoplasmic vesicle. It localises to the secretory vesicle lumen. Its subcellular location is the phagocytic cup. Functionally, plays important roles in the innate immune response as effector of glucocorticoid-mediated responses and regulator of the inflammatory process. Has anti-inflammatory activity. Plays a role in glucocorticoid-mediated down-regulation of the early phase of the inflammatory response. Contributes to the adaptive immune response by enhancing signaling cascades that are triggered by T-cell activation, regulates differentiation and proliferation of activated T-cells. Promotes the differentiation of T-cells into Th1 cells and negatively regulates differentiation into Th2 cells. Has no effect on unstimulated T-cells. Negatively regulates hormone exocytosis via activation of the formyl peptide receptors and reorganization of the actin cytoskeleton. Has high affinity for Ca(2+) and can bind up to eight Ca(2+) ions. Displays Ca(2+)-dependent binding to phospholipid membranes. Plays a role in the formation of phagocytic cups and phagosomes. Plays a role in phagocytosis by mediating the Ca(2+)-dependent interaction between phagosomes and the actin cytoskeleton. Its function is as follows. Functions at least in part by activating the formyl peptide receptors and downstream signaling cascades. Promotes chemotaxis of granulocytes and monocytes via activation of the formyl peptide receptors. Promotes rearrangement of the actin cytoskeleton, cell polarization and cell migration. Promotes resolution of inflammation and wound healing. Acts via neutrophil N-formyl peptide receptors to enhance the release of CXCL2. This chain is Annexin A1 (ANXA1), found in Equus caballus (Horse).